Consider the following 204-residue polypeptide: Urease accessory protein UreG (204 aa).

Residue 15-22 coordinates GTP; it reads GPVGSGKT.

The protein belongs to the SIMIBI class G3E GTPase family. UreG subfamily. As to quaternary structure, homodimer. UreD, UreF and UreG form a complex that acts as a GTP-hydrolysis-dependent molecular chaperone, activating the urease apoprotein by helping to assemble the nickel containing metallocenter of UreC. The UreE protein probably delivers the nickel.

The protein localises to the cytoplasm. Facilitates the functional incorporation of the urease nickel metallocenter. This process requires GTP hydrolysis, probably effectuated by UreG. This Methylobacterium sp. (strain 4-46) protein is Urease accessory protein UreG.